Consider the following 173-residue polypeptide: Crossover junction endodeoxyribonuclease RuvC (173 aa).

Active-site residues include aspartate 8, glutamate 67, and aspartate 139. Mg(2+)-binding residues include aspartate 8, glutamate 67, and aspartate 139.

This sequence belongs to the RuvC family. Homodimer which binds Holliday junction (HJ) DNA. The HJ becomes 2-fold symmetrical on binding to RuvC with unstacked arms; it has a different conformation from HJ DNA in complex with RuvA. In the full resolvosome a probable DNA-RuvA(4)-RuvB(12)-RuvC(2) complex forms which resolves the HJ. Mg(2+) is required as a cofactor.

The protein resides in the cytoplasm. It catalyses the reaction Endonucleolytic cleavage at a junction such as a reciprocal single-stranded crossover between two homologous DNA duplexes (Holliday junction).. Its function is as follows. The RuvA-RuvB-RuvC complex processes Holliday junction (HJ) DNA during genetic recombination and DNA repair. Endonuclease that resolves HJ intermediates. Cleaves cruciform DNA by making single-stranded nicks across the HJ at symmetrical positions within the homologous arms, yielding a 5'-phosphate and a 3'-hydroxyl group; requires a central core of homology in the junction. The consensus cleavage sequence is 5'-(A/T)TT(C/G)-3'. Cleavage occurs on the 3'-side of the TT dinucleotide at the point of strand exchange. HJ branch migration catalyzed by RuvA-RuvB allows RuvC to scan DNA until it finds its consensus sequence, where it cleaves and resolves the cruciform DNA. The sequence is that of Crossover junction endodeoxyribonuclease RuvC from Shewanella loihica (strain ATCC BAA-1088 / PV-4).